The following is a 290-amino-acid chain: N-acetylmannosamine kinase (290 aa).

Residues 6–13 (ALDIGGTK) and 132–139 (GVGGGIIL) contribute to the ATP site. Positions 156, 166, 168, and 173 each coordinate Zn(2+).

It belongs to the ROK (NagC/XylR) family. NanK subfamily. In terms of assembly, homodimer.

It carries out the reaction an N-acyl-D-mannosamine + ATP = an N-acyl-D-mannosamine 6-phosphate + ADP + H(+). It functions in the pathway amino-sugar metabolism; N-acetylneuraminate degradation; D-fructose 6-phosphate from N-acetylneuraminate: step 2/5. In terms of biological role, catalyzes the phosphorylation of N-acetylmannosamine (ManNAc) to ManNAc-6-P. The chain is N-acetylmannosamine kinase from Yersinia pseudotuberculosis serotype O:1b (strain IP 31758).